The sequence spans 811 residues: Glycerol-3-phosphate acyltransferase (811 aa).

Residues 305–310 (CHRSHI) carry the HXXXXD motif motif.

It belongs to the GPAT/DAPAT family.

The protein resides in the cell inner membrane. It carries out the reaction sn-glycerol 3-phosphate + an acyl-CoA = a 1-acyl-sn-glycero-3-phosphate + CoA. The protein operates within phospholipid metabolism; CDP-diacylglycerol biosynthesis; CDP-diacylglycerol from sn-glycerol 3-phosphate: step 1/3. The polypeptide is Glycerol-3-phosphate acyltransferase (Histophilus somni (strain 129Pt) (Haemophilus somnus)).